A 361-amino-acid polypeptide reads, in one-letter code: Chorismate synthase (361 aa).

R47 serves as a coordination point for NADP(+). FMN contacts are provided by residues 124 to 126, G286, 301 to 305, and R327; these read RAS and KPTAT.

Belongs to the chorismate synthase family. Homotetramer. It depends on FMNH2 as a cofactor.

The catalysed reaction is 5-O-(1-carboxyvinyl)-3-phosphoshikimate = chorismate + phosphate. It functions in the pathway metabolic intermediate biosynthesis; chorismate biosynthesis; chorismate from D-erythrose 4-phosphate and phosphoenolpyruvate: step 7/7. Functionally, catalyzes the anti-1,4-elimination of the C-3 phosphate and the C-6 proR hydrogen from 5-enolpyruvylshikimate-3-phosphate (EPSP) to yield chorismate, which is the branch point compound that serves as the starting substrate for the three terminal pathways of aromatic amino acid biosynthesis. This reaction introduces a second double bond into the aromatic ring system. This is Chorismate synthase from Prochlorococcus marinus (strain NATL1A).